An 8886-amino-acid polypeptide reads, in one-letter code: Obscurin (8886 aa).

4 Ig-like domains span residues 9–99, 109–201, 234–320, and 329–415; these read PRFL…LRVD, PHFL…LVVD, PPSP…QTYS, and PTVP…AELS. A disulfide bond links cysteine 30 and cysteine 81. Positions 135–165 are disordered; sequence SPQPAVSWSKDGRRLGPPDAPHVRVEEHGES. A compositionally biased stretch (basic and acidic residues) spans 144-164; that stretch reads KDGRRLGPPDAPHVRVEEHGE. 2 cysteine pairs are disulfide-bonded: cysteine 257-cysteine 309 and cysteine 352-cysteine 402. Serine 393 carries the phosphoserine modification. The region spanning 513–610 is the Fibronectin type-III 1 domain; it reads PPADPVVKAK…FPGTMHLVPM (98 aa). Ig-like domains are found at residues 702–793, 859–951, 951–1043, 1043–1135, 1135–1227, 1227–1319, 1319–1407, 1411–1503, 1503–1595, 1595–1687, 1687–1779, 1779–1871, 1871–1963, 1963–2051, 2055–2147, 2152–2241, 2242–2325, 2329–2415, 2420–2504, 2598–2681, 2721–2812, 2900–2984, 3078–3162, 3258–3342, 3348–3431, 3527–3610, 3616–3700, 3785–3876, 3881–3964, 4042–4125, 4130–4213, 4219–4301, 4307–4389, 4395–4477, 4483–4565, 4571–4653, 4659–4741, 4746–4829, 4833–4916, 4923–5007, 5013–5105, 5378–5464, and 5557–5659; these read PSSK…QDIT, PKLV…VAEP, PKMV…VTEP, PKLV…VTEP, PKLV…FRLD, PKLA…VAEP, PKLM…VAEP, TRLM…VAEA, PERP…EEVA, AKFS…ARLT, PRVV…AALR, PVLF…AKLN, PVSF…ASLR, PVTL…QSIT, PVVL…AEVT, PVVF…SKVS, PVDI…AKLC, NRFT…ARLL, PSIF…SSIV, PVRF…ATLT, ATLT…ATLT, PAKF…ATLT, PTKF…ATLS, PSRF…ATLS, PRFI…ATLN, PRFI…AVLT, PKFT…ATLS, PRFI…ATLS, PAKF…ATLS, PQVV…TSAT, PVRF…ARLS, PKFK…PEVT, LEVL…ARLS, and PQMV…TFNV. 14 disulfides stabilise this stretch: cysteine 885–cysteine 935, cysteine 977–cysteine 1027, cysteine 1069–cysteine 1119, cysteine 1161–cysteine 1211, cysteine 1253–cysteine 1303, cysteine 1345–cysteine 1395, cysteine 1437–cysteine 1487, cysteine 1529–cysteine 1579, cysteine 1621–cysteine 1671, cysteine 1713–cysteine 1763, cysteine 1805–cysteine 1855, cysteine 1897–cysteine 1947, cysteine 1989–cysteine 2039, and cysteine 2081–cysteine 2131. Cysteine 2263 and cysteine 2313 are oxidised to a cystine. 8 cysteine pairs are disulfide-bonded: cysteine 2620-cysteine 2669, cysteine 2743-cysteine 2793, cysteine 2922-cysteine 2972, cysteine 3100-cysteine 3150, cysteine 3280-cysteine 3330, cysteine 3369-cysteine 3419, cysteine 3549-cysteine 3599, and cysteine 3638-cysteine 3688. Serine 3321 carries the post-translational modification Phosphoserine. Serine 3802 is modified (phosphoserine). Disulfide bonds link cysteine 3815–cysteine 3864, cysteine 3903–cysteine 3952, cysteine 4064–cysteine 4113, cysteine 4152–cysteine 4201, cysteine 4240–cysteine 4289, cysteine 4328–cysteine 4377, cysteine 4416–cysteine 4465, cysteine 4504–cysteine 4553, cysteine 4592–cysteine 4641, cysteine 4680–cysteine 4729, cysteine 4768–cysteine 4817, cysteine 4856–cysteine 4906, cysteine 4945–cysteine 4995, and cysteine 5034–cysteine 5086. Serine 4960 is modified (phosphoserine). The Fibronectin type-III 2 domain maps to 5471-5569; the sequence is PPEDAEVVGR…VKIAPAPAPA (99 aa). A disulfide bridge links cysteine 5590 with cysteine 5643. Serine 5699 is modified (phosphoserine). The interval 5700–5736 is disordered; it reads REPTLDSISELPEEDSRVQHLRQEAEETAPDLSEGYS. Threonine 5703 is subject to Phosphothreonine. Serine 5706 is subject to Phosphoserine. The segment covering 5713–5724 has biased composition (basic and acidic residues); it reads EDSRVQHLRQEA. Threonine 5737 bears the Phosphothreonine mark. The residue at position 5754 (serine 5754) is a Phosphoserine. Positions 5821-5850 constitute an IQ domain; it reads LDKAAVKIQAAFKGYKVRKEMKQQEGPVFS. Residues 5847 to 5930 enclose the Ig-like 48 domain; that stretch reads PVFSRTFGDT…QVSTKSGRVS (84 aa). The cysteines at positions 5868 and 5920 are disulfide-linked. The disordered stretch occupies residues 5977-5996; sequence EEELFLSADEGPGEPEEPAD. 3 Ig-like domains span residues 6077-6166, 6209-6298, and 6320-6416; these read PVFL…AELR, PQVL…ARLL, and PRIL…LHIS. A disulfide bridge links cysteine 6098 with cysteine 6150. The interval 6504–6546 is disordered; the sequence is KLQVPGGDSDEETKTPSASPRHGRSRPSSSVQESSSESEDGDS. A Phosphoserine modification is found at serine 6512. Threonine 6518 is modified (phosphothreonine). Low complexity predominate over residues 6519–6538; the sequence is PSASPRHGRSRPSSSVQESS. Serine 6520 and serine 6522 each carry phosphoserine. In terms of domain architecture, SH3 spans 6549 to 6616; it reads EIFDIYVVTA…SPAYLDKRLK (68 aa). Positions 6642 to 6826 constitute a DH domain; the sequence is RLSSVIQELL…SALPQRAENK (185 aa). The PH domain maps to 6844 to 6953; sequence EPIRQGHFIV…WVKEICGIQQ (110 aa). Residue arginine 6924 participates in a 1,2-diacyl-sn-glycero-3-phospho-(1D-myo-inositol-4,5-bisphosphate) binding. Arginine 6929 is a binding site for a 1,2-diacyl-sn-glycero-3-phospho-(1D-myo-inositol-3,4-bisphosphate). 2 consecutive Ig-like domains span residues 6963-7046 and 7057-7147; these read PEFE…GNAS and PRFV…GELY. Cystine bridges form between cysteine 6984-cysteine 7036 and cysteine 7078-cysteine 7131. The tract at residues 7200 to 7257 is disordered; the sequence is ALGPSPGDLPNTRQSEPPAFEEAASQIPGAASGTPEVSQPGTHKGLEQETTSSGSQGW. A compositionally biased stretch (polar residues) spans 7247–7257; sequence QETTSSGSQGW. An Ig-like 54 domain is found at 7306–7394; it reads PSMQVTIEDV…GQVLCKAELL (89 aa). One can recognise a Protein kinase 1 domain in the interval 7416–7669; that stretch reads YDVQEEIGRG…TSQCLAHPWF (254 aa). Residues 7422–7430 and lysine 7445 each bind ATP; that span reads IGRGVFGFV. The active-site Proton acceptor is the aspartate 7535. Disordered regions lie at residues 7717–7810, 7879–8106, and 8150–8180; these read GPPD…SPGC, EQAS…TTRK, and SSEE…VPLR. At serine 7779 the chain carries Phosphoserine. The segment covering 7793–7804 has biased composition (low complexity); that stretch reads AAVPASPQSAGP. The span at 7941 to 7952 shows a compositional bias: basic and acidic residues; sequence TTAKDRGHKEGF. Residues 7986–7996 show a composition bias toward polar residues; that stretch reads SCHSELGSGSQ. Composition is skewed to low complexity over residues 8000–8014 and 8053–8073; these read GPPS…PPQS and GSLS…ASQV. Serine 8161 carries the post-translational modification Phosphoserine. Residues 8380-8464 enclose the Ig-like 55 domain; that stretch reads KGRDQELSDE…VSNPLGTAVT (85 aa). Cysteines 8401 and 8453 form a disulfide. Residues 8474 to 8566 enclose the Fibronectin type-III 3 domain; that stretch reads PSSSPRPEVG…PSEQVLLGGP (93 aa). Positions 8590–8842 constitute a Protein kinase 2 domain; the sequence is FAFQMQIRRG…ASTCLQCGWL (253 aa). ATP contacts are provided by residues 8596–8604 and lysine 8619; that span reads IRRGRFSVV. The Proton acceptor role is filled by aspartate 8709.

It belongs to the protein kinase superfamily. CAMK Ser/Thr protein kinase family. In terms of assembly, interacts (via protein kinase domain 1) with CDH2 and (via protein kinase domain 1) with ATP1B1. Isoform 2 is found in a complex with DSG2, DESM, GJA1, CDH2 and VCL. Isoform 3 is found in a complex with DSG2, DESM, GJA1, CDH2, ANK3 and VCL. It depends on Mg(2+) as a cofactor. In terms of processing, autophosphorylated by protein kinase domain 1 and 2. Post-translationally, two small isoforms, one probably containing protein kinase domain 2 and a partial protein kinase domain 1 and one containing only protein kinase domain 2, are glycosylated. Expressed in skeletal muscles including flexor digitorum brevis (FDB), soleus and tibialis anterior muscles, and to a lesser extent in heart muscles (at protein level). Isoform 2 and isoform 3 are expressed in the myocardium (at protein level).

It localises to the cytoplasm. It is found in the myofibril. Its subcellular location is the sarcomere. The protein localises to the m line. The protein resides in the z line. It localises to the cell membrane. It is found in the sarcolemma. Its subcellular location is the nucleus. The protein localises to the secreted. The catalysed reaction is L-seryl-[protein] + ATP = O-phospho-L-seryl-[protein] + ADP + H(+). It carries out the reaction L-threonyl-[protein] + ATP = O-phospho-L-threonyl-[protein] + ADP + H(+). Functionally, structural component of striated muscles which plays a role in myofibrillogenesis. Probably involved in the assembly of myosin into sarcomeric A bands in striated muscle. Has serine/threonine protein kinase activity and phosphorylates N-cadherin CDH2 and sodium/potassium-transporting ATPase subunit ATP1B1. Binds (via the PH domain) strongly to phosphatidylinositol 3,4-bisphosphate (PtdIns(3,4)P2) and phosphatidylinositol 4,5-bisphosphate (PtdIns(4,5)P2), and to a lesser extent to phosphatidylinositol 3-phosphate (PtdIns(3)P), phosphatidylinositol 4-phosphate (PtdIns(4)P), phosphatidylinositol 5-phosphate (PtdIns(5)P) and phosphatidylinositol 3,4,5-trisphosphate (PtdIns(3,4,5)P3). In terms of biological role, isoform 2 and isoform 3: bind phosphatidylinositol bisphosphates (PIP2s) via their PH domains and negatively regulate the PI3K/AKT/mTOR signaling pathway, thus contributing to the regulation of cardiomyocyte size and adhesion. This Mus musculus (Mouse) protein is Obscurin.